We begin with the raw amino-acid sequence, 501 residues long: Ribose import ATP-binding protein RbsA (501 aa).

ABC transporter domains follow at residues 5-241 (LELK…VGRK) and 249-495 (LNLP…VGKQ). Residue 37-44 (GENGAGKS) participates in ATP binding.

It belongs to the ABC transporter superfamily. Ribose importer (TC 3.A.1.2.1) family. The complex is composed of an ATP-binding protein (RbsA), two transmembrane proteins (RbsC) and a solute-binding protein (RbsB).

The protein resides in the cell inner membrane. It catalyses the reaction D-ribose(out) + ATP + H2O = D-ribose(in) + ADP + phosphate + H(+). In terms of biological role, part of the ABC transporter complex RbsABC involved in ribose import. Responsible for energy coupling to the transport system. In Photorhabdus laumondii subsp. laumondii (strain DSM 15139 / CIP 105565 / TT01) (Photorhabdus luminescens subsp. laumondii), this protein is Ribose import ATP-binding protein RbsA.